The chain runs to 417 residues: uncharacterized protein (417 aa).

Residues 1-21 (MPYYWGAILIGGVFLAGCTQN) form the signal peptide.

This is an uncharacterized protein from Methanocaldococcus jannaschii (strain ATCC 43067 / DSM 2661 / JAL-1 / JCM 10045 / NBRC 100440) (Methanococcus jannaschii).